Consider the following 853-residue polypeptide: Cytochrome P450 monooxygenase mpaDE (853 aa).

At 1–6 the chain is on the lumenal side; sequence MKSLSL. A helical membrane pass occupies residues 7-29; sequence TWITAVAVVLYLVQRYVRSYWRL. The Cytoplasmic portion of the chain corresponds to 30-853; it reads KDIPGPVLAK…DIENSIEGQK (824 aa). Cysteine 449 serves as a coordination point for heme.

It belongs to the cytochrome P450 family. The cofactor is heme.

It is found in the endoplasmic reticulum membrane. The enzyme catalyses 5-methylorsellinate + reduced [NADPH--hemoprotein reductase] + O2 = 4,6-dihydroxy-2-(hydroxymethyl)-3-methylbenzoate + oxidized [NADPH--hemoprotein reductase] + H2O + H(+). It catalyses the reaction 4,6-dihydroxy-2-(hydroxymethyl)-3-methylbenzoate + H(+) = 5,7-dihydroxy-4-methylphthalide + H2O. It participates in secondary metabolite biosynthesis; terpenoid biosynthesis. In terms of biological role, cytochrome P450 monooxygenase; part of the gene cluster that mediates the biosynthesis of mycophenolic acid (MPA), the first isolated antibiotic natural product in the world obtained from a culture of Penicillium brevicompactum in 1893. MpaDE is an endoplasmic reticulum-bound enzyme that catalyzes the conversion of 5-methylorsellinic acid (5MOA) into the phthalide compound 5,7-dihydroxy-4,6-dimethylphthalide (DHMP). MpaDE first catalyzes hydroxylation of 5-MOA to 4,6-dihydroxy-2-(hydroxymethyl)-3-methylbenzoic acid (DHMB), and then acts as a lactone synthase that catalyzes the ring closure to convert DHMB into DHMP. The first step of the pathway is the synthesis of 5-methylorsellinic acid (5MOA) by the cytosolic polyketide synthase mpaC. 5MOA is then converted to the phthalide compound 5,7-dihydroxy-4,6-dimethylphthalide (DHMP) by the endoplasmic reticulum-bound cytochrome P450 monooxygenase mpaDE. MpaDE first catalyzes hydroxylation of 5-MOA to 4,6-dihydroxy-2-(hydroxymethyl)-3-methylbenzoic acid (DHMB). MpaDE then acts as a lactone synthase that catalyzes the ring closure to convert DHMB into DHMP. The next step is the prenylation of DHMP by the Golgi apparatus-associated prenyltransferase mpaA to yield farnesyl-DHMP (FDHMP). The ER-bound oxygenase mpaB then mediates the oxidative cleavage the C19-C20 double bond in FDHMP to yield FDHMP-3C via a mycophenolic aldehyde intermediate. The O-methyltransferase mpaG catalyzes the methylation of FDHMP-3C to yield MFDHMP-3C. After the cytosolic methylation of FDHMP-3C, MFDHMP-3C enters into peroxisomes probably via free diffusion due to its low molecular weight. Upon a peroxisomal CoA ligation reaction, catalyzed by a beta-oxidation component enzyme acyl-CoA ligase ACL891, MFDHMP-3C-CoA would then be restricted to peroxisomes for the following beta-oxidation pathway steps. The peroxisomal beta-oxidation machinery than converts MFDHMP-3C-CoA into MPA_CoA, via a beta-oxidation chain-shortening process. Finally mpaH acts as a peroxisomal acyl-CoA hydrolase with high substrate specificity toward MPA-CoA to release the final product MPA. In Penicillium brevicompactum, this protein is Cytochrome P450 monooxygenase mpaDE.